The sequence spans 235 residues: Purine nucleoside phosphorylase DeoD-type (235 aa).

His4 lines the a purine D-ribonucleoside pocket. Residues Gly20, Arg24, Arg43, and 87-90 contribute to the phosphate site; that span reads RVGT. Residues 180 to 182 and 204 to 205 contribute to the a purine D-ribonucleoside site; these read EME and SD. The active-site Proton donor is the Asp205.

It belongs to the PNP/UDP phosphorylase family. In terms of assembly, homohexamer; trimer of homodimers.

It catalyses the reaction a purine D-ribonucleoside + phosphate = a purine nucleobase + alpha-D-ribose 1-phosphate. The enzyme catalyses a purine 2'-deoxy-D-ribonucleoside + phosphate = a purine nucleobase + 2-deoxy-alpha-D-ribose 1-phosphate. In terms of biological role, catalyzes the reversible phosphorolytic breakdown of the N-glycosidic bond in the beta-(deoxy)ribonucleoside molecules, with the formation of the corresponding free purine bases and pentose-1-phosphate. The chain is Purine nucleoside phosphorylase DeoD-type from Oceanobacillus iheyensis (strain DSM 14371 / CIP 107618 / JCM 11309 / KCTC 3954 / HTE831).